The following is a 327-amino-acid chain: Phospho-N-acetylmuramoyl-pentapeptide-transferase (327 aa).

10 helical membrane passes run 3–23, 51–71, 75–95, 115–135, 140–160, 172–192, 197–217, 223–243, 248–268, and 306–326; these read IALI…PAFI, TMGG…IGLF, LSNG…VGFL, LFLQ…HGAG, IFTV…FWLI, IDGL…VIAV, FDIL…FVFN, IFMG…ISIS, WTLL…MMQV, and VDFF…AILY.

Belongs to the glycosyltransferase 4 family. MraY subfamily. The cofactor is Mg(2+).

It is found in the cell membrane. It catalyses the reaction UDP-N-acetyl-alpha-D-muramoyl-L-alanyl-gamma-D-glutamyl-L-lysyl-D-alanyl-D-alanine + di-trans,octa-cis-undecaprenyl phosphate = Mur2Ac(oyl-L-Ala-gamma-D-Glu-L-Lys-D-Ala-D-Ala)-di-trans,octa-cis-undecaprenyl diphosphate + UMP. Its pathway is cell wall biogenesis; peptidoglycan biosynthesis. Its function is as follows. Catalyzes the initial step of the lipid cycle reactions in the biosynthesis of the cell wall peptidoglycan: transfers peptidoglycan precursor phospho-MurNAc-pentapeptide from UDP-MurNAc-pentapeptide onto the lipid carrier undecaprenyl phosphate, yielding undecaprenyl-pyrophosphoryl-MurNAc-pentapeptide, known as lipid I. The sequence is that of Phospho-N-acetylmuramoyl-pentapeptide-transferase from Streptococcus sanguinis (strain SK36).